Consider the following 126-residue polypeptide: Cell cycle protein GpsB (126 aa).

Residues 35–72 (LDLVIKDYQTYQENIDRLTADNTRLFNKVEELNRQLSA) are a coiled coil.

This sequence belongs to the GpsB family. Forms polymers through the coiled coil domains. Interacts with PBP1, MreC and EzrA.

The protein localises to the cytoplasm. Functionally, divisome component that associates with the complex late in its assembly, after the Z-ring is formed, and is dependent on DivIC and PBP2B for its recruitment to the divisome. Together with EzrA, is a key component of the system that regulates PBP1 localization during cell cycle progression. Its main role could be the removal of PBP1 from the cell pole after pole maturation is completed. Also contributes to the recruitment of PBP1 to the division complex. Not essential for septum formation. In Latilactobacillus sakei subsp. sakei (strain 23K) (Lactobacillus sakei subsp. sakei), this protein is Cell cycle protein GpsB.